The sequence spans 396 residues: Argininosuccinate synthase (396 aa).

9–17 (AFSGGLDTT) is an ATP binding site. An L-citrulline-binding site is contributed by Tyr86. Residue Gly116 participates in ATP binding. Thr118, Asn122, and Asp123 together coordinate L-aspartate. Position 122 (Asn122) interacts with L-citrulline. Positions 126, 172, 181, 254, and 266 each coordinate L-citrulline.

It belongs to the argininosuccinate synthase family. Type 1 subfamily. As to quaternary structure, homotetramer.

It localises to the cytoplasm. It carries out the reaction L-citrulline + L-aspartate + ATP = 2-(N(omega)-L-arginino)succinate + AMP + diphosphate + H(+). It functions in the pathway amino-acid biosynthesis; L-arginine biosynthesis; L-arginine from L-ornithine and carbamoyl phosphate: step 2/3. The protein is Argininosuccinate synthase of Halobacterium salinarum (strain ATCC 700922 / JCM 11081 / NRC-1) (Halobacterium halobium).